We begin with the raw amino-acid sequence, 417 residues long: Putative plant UBX domain-containing protein 14 (417 aa).

The UBX domain occupies 335–415; sequence DRSVVCSICV…GIANSMISVT (81 aa).

This Arabidopsis thaliana (Mouse-ear cress) protein is Putative plant UBX domain-containing protein 14.